The chain runs to 333 residues: Protoheme IX farnesyltransferase (333 aa).

Low complexity predominate over residues 1 to 13 (MVSSTSQIISTSP). A disordered region spans residues 1–21 (MVSSTSQIISTSPSRDDVVPS). The next 8 helical transmembrane spans lie at 38–58 (LIPL…GWPL), 63–83 (LACT…LNCL), 109–129 (AVFT…VSGV), 132–152 (LAAG…TAFL), 160–180 (IVIG…AATG), 188–208 (WLFA…AILL), 245–265 (CFGV…LVPF), and 286–306 (AKGL…LLVV).

It belongs to the UbiA prenyltransferase family. Protoheme IX farnesyltransferase subfamily.

It is found in the cell inner membrane. It catalyses the reaction heme b + (2E,6E)-farnesyl diphosphate + H2O = Fe(II)-heme o + diphosphate. It participates in porphyrin-containing compound metabolism; heme O biosynthesis; heme O from protoheme: step 1/1. Its function is as follows. Converts heme B (protoheme IX) to heme O by substitution of the vinyl group on carbon 2 of heme B porphyrin ring with a hydroxyethyl farnesyl side group. The polypeptide is Protoheme IX farnesyltransferase (Prochlorococcus marinus (strain SARG / CCMP1375 / SS120)).